We begin with the raw amino-acid sequence, 181 residues long: UPF0302 protein ABC1905 (181 aa).

The protein belongs to the UPF0302 family.

This is UPF0302 protein ABC1905 from Shouchella clausii (strain KSM-K16) (Alkalihalobacillus clausii).